The chain runs to 1078 residues: mRNA 3'-end-processing protein rna14 (1078 aa).

Disordered stretches follow at residues 15–209 (AMNA…DTPA) and 222–251 (QSEN…HDRV). Residues 42-55 (KTLQDQYSASILDS) show a composition bias toward polar residues. Residues 58–68 (SEIAPSSASPS) show a composition bias toward low complexity. Over residues 82–115 (DPSQPADSAYPSQTPSRADSQASVSAPASGTSVP) the composition is skewed to polar residues. Over residues 126–139 (VEDEDEDDAGDADY) the composition is skewed to acidic residues. Polar residues-rich tracts occupy residues 151–170 (NTIS…NEDT) and 190–206 (FPNS…SKSD). HAT repeat units follow at residues 280-312 (NRID…MESE), 314-345 (NELY…YVRR), 356-391 (QSRR…FIRS), 405-438 (QKMD…FEMG), 475-508 (TTLP…WEKG), and 520-552 (AFKA…FCFL). Disordered regions lie at residues 632 to 663 (ETFA…ESMK) and 851 to 950 (PTVV…QGSP). A compositionally biased stretch (polar residues) spans 879 to 894 (GTPSSRYPDASVTNSP). Positions 896–907 (RPLEDFDDEMNR) are enriched in basic and acidic residues. A compositionally biased stretch (polar residues) spans 931–949 (RTQQVISNQTGSQFRSQGS).

Its subcellular location is the nucleus. The protein localises to the cytoplasm. Component of the cleavage factor IA (CFIA) complex, which is involved in the endonucleolytic cleavage during polyadenylation-dependent pre-mRNA 3'-end formation. The polypeptide is mRNA 3'-end-processing protein rna14 (rna14) (Aspergillus oryzae (strain ATCC 42149 / RIB 40) (Yellow koji mold)).